We begin with the raw amino-acid sequence, 1141 residues long: cGMP-inhibited 3',5'-cyclic phosphodiesterase 3A (1141 aa).

A disordered region spans residues 1 to 42 (MAVPGDAARVRDKPVHSGVSQAPTAGRDCHHRADPASPRDSG). 6 helical membrane passes run 61-81 (LSSA…VRLV), 130-150 (LQPS…GLYL), 160-180 (AVAL…GLGV), 185-205 (LLSL…TWLV), 210-230 (LGVL…ISLE), and 232-252 (FKVA…ILLA). Position 312 is a phosphoserine (serine 312). Serine 428 and serine 438 each carry phosphoserine; by PKA and PKC. The segment covering 436–448 (RVSSTWTTTTSAT) has biased composition (low complexity). A disordered region spans residues 436–482 (RVSSTWTTTTSATGLPTLEPAPVRRDRSTSIKLQEAPSSSPDSWNNP). Polar residues predominate over residues 465–482 (SIKLQEAPSSSPDSWNNP). 3 positions are modified to phosphoserine: serine 492, serine 520, and serine 524. A disordered region spans residues 590-640 (RPYSQGNPADEPLERSGVATRTPSRTDDTAQVTSDYETNNNSDSSDIVQNE). The segment covering 608–637 (ATRTPSRTDDTAQVTSDYETNNNSDSSDIV) has biased composition (polar residues). The interaction with SLFN12 stretch occupies residues 669–1141 (KPILAPEPLV…EEIPTQKPDQ (473 aa)). Residues 674–1093 (PEPLVMDNLD…KMWKKVIEEE (420 aa)) form the PDEase domain. Residue histidine 752 is the Proton donor of the active site. Histidine 752 contributes to the AMP binding site. Residues histidine 756, histidine 836, aspartate 837, and aspartate 950 each contribute to the Mn(2+) site. AMP-binding residues include aspartate 837, aspartate 950, and glutamine 1001. Aspartate 837 provides a ligand contact to Mg(2+). Disordered stretches follow at residues 1023-1062 (PGKW…ESPK) and 1100-1141 (ENQS…KPDQ). Residues 1029-1056 (DSDESGDTDDPEEEEEEAPAPNEEETCE) show a composition bias toward acidic residues. Serine 1033 carries the post-translational modification Phosphoserine. Position 1036 is a phosphothreonine (threonine 1036). Polar residues predominate over residues 1100–1113 (ENQSLDQTPQSHSS). A Glycyl lysine isopeptide (Lys-Gly) (interchain with G-Cter in SUMO2) cross-link involves residue lysine 1120. Residues 1125 to 1141 (EKGKPRGEEIPTQKPDQ) show a composition bias toward basic and acidic residues.

The protein belongs to the cyclic nucleotide phosphodiesterase family. PDE3 subfamily. Homodimer. Interacts with SLFN12; direct low affinity interaction which is stimulated by binding of 17beta-estradiol/E2 to PDE3A and that positively regulates the ribonuclease activity of SLFN12. Requires Mn(2+) as cofactor. Mg(2+) is required as a cofactor.

It localises to the membrane. It is found in the cytoplasm. The protein resides in the cytosol. It carries out the reaction a nucleoside 3',5'-cyclic phosphate + H2O = a nucleoside 5'-phosphate + H(+). It catalyses the reaction 3',5'-cyclic AMP + H2O = AMP + H(+). The enzyme catalyses 3',5'-cyclic GMP + H2O = GMP + H(+). The catalysed reaction is 3',5'-cyclic UMP + H2O = UMP + H(+). With respect to regulation, inhibited by cGMP. Inhibited by 17beta-estradiol. Inhibited by milrinone. Its function is as follows. Cyclic nucleotide phosphodiesterase with specificity for the second messengers cAMP and cGMP, which are key regulators of many important physiological processes. Also has activity toward cUMP. Independently of its catalytic activity it is part of an E2/17beta-estradiol-induced pro-apoptotic signaling pathway. E2 stabilizes the PDE3A/SLFN12 complex in the cytosol, promoting the dephosphorylation of SLFN12 and activating its pro-apoptotic ribosomal RNA/rRNA ribonuclease activity. This apoptotic pathway might be relevant in tissues with high concentration of E2 and be for instance involved in placenta remodeling. The polypeptide is cGMP-inhibited 3',5'-cyclic phosphodiesterase 3A (Homo sapiens (Human)).